Reading from the N-terminus, the 157-residue chain is WPP domain-containing protein 3 (157 aa).

Polar residues predominate over residues 1-20; sequence MAETADTINTTVSTPQPQLE. The disordered stretch occupies residues 1–41; the sequence is MAETADTINTTVSTPQPQLESRSDETSCLQKHRSDATSEVT. The segment covering 32–41 has biased composition (basic and acidic residues); the sequence is HRSDATSEVT. Positions 37–138 are WPP; degenerate; the sequence is TSEVTKEEKS…IESAEVRFKA (102 aa).

Expressed in roots, stems and leaves.

It is found in the cytoplasm. The protein localises to the nucleus. Regulates the mitotic activity in roots. The sequence is that of WPP domain-containing protein 3 (WPP3) from Arabidopsis thaliana (Mouse-ear cress).